Consider the following 433-residue polypeptide: tRNA-2-methylthio-N(6)-dimethylallyladenosine synthase (433 aa).

The region spanning 3 to 118 (KKLFIQTLGC…ISRVIHQEKA (116 aa)) is the MTTase N-terminal domain. 6 residues coordinate [4Fe-4S] cluster: Cys-12, Cys-49, Cys-81, Cys-150, Cys-154, and Cys-157. A Radical SAM core domain is found at 136-369 (SRNDYKAMVN…QARHKEILEE (234 aa)). Residues 372–433 (QKEVGAIHSV…YRAFLIGEPL (62 aa)) form the TRAM domain.

The protein belongs to the methylthiotransferase family. MiaB subfamily. As to quaternary structure, monomer. [4Fe-4S] cluster is required as a cofactor.

It is found in the cytoplasm. It catalyses the reaction N(6)-dimethylallyladenosine(37) in tRNA + (sulfur carrier)-SH + AH2 + 2 S-adenosyl-L-methionine = 2-methylsulfanyl-N(6)-dimethylallyladenosine(37) in tRNA + (sulfur carrier)-H + 5'-deoxyadenosine + L-methionine + A + S-adenosyl-L-homocysteine + 2 H(+). In terms of biological role, catalyzes the methylthiolation of N6-(dimethylallyl)adenosine (i(6)A), leading to the formation of 2-methylthio-N6-(dimethylallyl)adenosine (ms(2)i(6)A) at position 37 in tRNAs that read codons beginning with uridine. This chain is tRNA-2-methylthio-N(6)-dimethylallyladenosine synthase, found in Wolinella succinogenes (strain ATCC 29543 / DSM 1740 / CCUG 13145 / JCM 31913 / LMG 7466 / NCTC 11488 / FDC 602W) (Vibrio succinogenes).